The following is an 86-amino-acid chain: Large ribosomal subunit protein bL27 (86 aa).

Over residues 1 to 10 (MAQKKGGGST) the composition is skewed to gly residues. Positions 1-22 (MAQKKGGGSTRNGRDSESKRLG) are disordered.

This sequence belongs to the bacterial ribosomal protein bL27 family.

The protein is Large ribosomal subunit protein bL27 of Polynucleobacter asymbioticus (strain DSM 18221 / CIP 109841 / QLW-P1DMWA-1) (Polynucleobacter necessarius subsp. asymbioticus).